The chain runs to 368 residues: Phosphate acyltransferase (368 aa).

It belongs to the PlsX family. Homodimer. Probably interacts with PlsY.

Its subcellular location is the cytoplasm. The enzyme catalyses a fatty acyl-[ACP] + phosphate = an acyl phosphate + holo-[ACP]. It functions in the pathway lipid metabolism; phospholipid metabolism. Functionally, catalyzes the reversible formation of acyl-phosphate (acyl-PO(4)) from acyl-[acyl-carrier-protein] (acyl-ACP). This enzyme utilizes acyl-ACP as fatty acyl donor, but not acyl-CoA. The sequence is that of Phosphate acyltransferase from Granulibacter bethesdensis (strain ATCC BAA-1260 / CGDNIH1).